We begin with the raw amino-acid sequence, 179 residues long: Dynein light chain Tctex-type 5 (179 aa).

This sequence belongs to the dynein light chain Tctex-type family. As to quaternary structure, interacts with ZMYND10.

The polypeptide is Dynein light chain Tctex-type 5 (DYNLT5) (Homo sapiens (Human)).